We begin with the raw amino-acid sequence, 272 residues long: Proteasome subunit beta type-5 (272 aa).

A propeptide spans 1–62 (MINIDFDNIE…APKALEFAHG (62 aa)) (removed in mature form). Thr-63 functions as the Nucleophile in the catalytic mechanism.

Belongs to the peptidase T1B family. In terms of assembly, the 26S proteasome consists of a 20S proteasome core and two 19S regulatory subunits. The 20S proteasome core is composed of 28 subunits that are arranged in four stacked rings, resulting in a barrel-shaped structure. The two end rings are each formed by seven alpha subunits, and the two central rings are each formed by seven beta subunits. The catalytic chamber with the active sites is on the inside of the barrel.

It is found in the cytoplasm. It localises to the nucleus. The enzyme catalyses Cleavage of peptide bonds with very broad specificity.. The proteasome is a multicatalytic proteinase complex which is characterized by its ability to cleave peptides with Arg, Phe, Tyr, Leu, and Glu adjacent to the leaving group at neutral or slightly basic pH. The proteasome has an ATP-dependent proteolytic activity. In Dictyostelium discoideum (Social amoeba), this protein is Proteasome subunit beta type-5 (psmB5).